We begin with the raw amino-acid sequence, 350 residues long: Magnesium-chelatase 38 kDa subunit (350 aa).

52–59 (GDRGTGKS) provides a ligand contact to ATP.

It belongs to the Mg-chelatase subunits D/I family.

The catalysed reaction is protoporphyrin IX + Mg(2+) + ATP + H2O = Mg-protoporphyrin IX + ADP + phosphate + 3 H(+). The protein operates within porphyrin-containing compound metabolism; bacteriochlorophyll biosynthesis. Involved in bacteriochlorophyll biosynthesis; introduces a magnesium ion into protoporphyrin IX to yield Mg-protoporphyrin IX. This is Magnesium-chelatase 38 kDa subunit (bchI) from Rhodobacter capsulatus (strain ATCC BAA-309 / NBRC 16581 / SB1003).